The following is a 262-amino-acid chain: 5'-nucleotidase SurE (262 aa).

A divalent metal cation-binding residues include aspartate 13, aspartate 14, serine 44, and asparagine 97.

The protein belongs to the SurE nucleotidase family. It depends on a divalent metal cation as a cofactor.

The protein resides in the cytoplasm. It catalyses the reaction a ribonucleoside 5'-phosphate + H2O = a ribonucleoside + phosphate. Functionally, nucleotidase that shows phosphatase activity on nucleoside 5'-monophosphates. This is 5'-nucleotidase SurE from Myxococcus xanthus (strain DK1622).